The following is a 138-amino-acid chain: Ostreolysin A6 (138 aa).

Belongs to the aegerolysin family. In terms of assembly, monomer.

Has hemolytic activity against bovine erythrocytes at nanomolar concentrations in vitro. Promotes active pleurotolysin B (PlyB)-dependent permeabilization of membranes rich in cholesterol and sphingomyelin. May play an important role in the initial phase of fungal fruiting. This chain is Ostreolysin A6 (OlyA6), found in Pleurotus ostreatus (Oyster mushroom).